The sequence spans 459 residues: Exodeoxyribonuclease 7 large subunit (459 aa).

Belongs to the XseA family. In terms of assembly, heterooligomer composed of large and small subunits.

The protein resides in the cytoplasm. It carries out the reaction Exonucleolytic cleavage in either 5'- to 3'- or 3'- to 5'-direction to yield nucleoside 5'-phosphates.. Its function is as follows. Bidirectionally degrades single-stranded DNA into large acid-insoluble oligonucleotides, which are then degraded further into small acid-soluble oligonucleotides. The chain is Exodeoxyribonuclease 7 large subunit from Pseudomonas syringae pv. tomato (strain ATCC BAA-871 / DC3000).